The sequence spans 141 residues: Hemoglobin subunit alpha (141 aa).

The interval Val1–Gly22 is disordered. The 141-residue stretch at Val1–Arg141 folds into the Globin domain. His58 lines the O2 pocket. Heme b is bound at residue His87.

This sequence belongs to the globin family. Heterotetramer of two alpha chains and two beta chains. As to expression, red blood cells.

Functionally, involved in oxygen transport from the lung to the various peripheral tissues. In Vipera aspis (Aspic viper), this protein is Hemoglobin subunit alpha (HBA).